Here is a 205-residue protein sequence, read N- to C-terminus: Holliday junction branch migration complex subunit RuvA (205 aa).

Residues 1–64 (MIGKLTGLVD…EDAIRLFGFP (64 aa)) form a domain I region. Residues 65–143 (SEVERDWFRL…ALGPVDSLTA (79 aa)) form a domain II region. The interval 144 to 153 (KLTIAEAEGT) is flexible linker. A domain III region spans residues 153–205 (TAPVAAQDAITALVNLGYGRPQAAAAVATSLEALGETAPLADLIRRGLKELAR).

This sequence belongs to the RuvA family. In terms of assembly, homotetramer. Forms an RuvA(8)-RuvB(12)-Holliday junction (HJ) complex. HJ DNA is sandwiched between 2 RuvA tetramers; dsDNA enters through RuvA and exits via RuvB. An RuvB hexamer assembles on each DNA strand where it exits the tetramer. Each RuvB hexamer is contacted by two RuvA subunits (via domain III) on 2 adjacent RuvB subunits; this complex drives branch migration. In the full resolvosome a probable DNA-RuvA(4)-RuvB(12)-RuvC(2) complex forms which resolves the HJ.

The protein localises to the cytoplasm. The RuvA-RuvB-RuvC complex processes Holliday junction (HJ) DNA during genetic recombination and DNA repair, while the RuvA-RuvB complex plays an important role in the rescue of blocked DNA replication forks via replication fork reversal (RFR). RuvA specifically binds to HJ cruciform DNA, conferring on it an open structure. The RuvB hexamer acts as an ATP-dependent pump, pulling dsDNA into and through the RuvAB complex. HJ branch migration allows RuvC to scan DNA until it finds its consensus sequence, where it cleaves and resolves the cruciform DNA. The chain is Holliday junction branch migration complex subunit RuvA from Beijerinckia indica subsp. indica (strain ATCC 9039 / DSM 1715 / NCIMB 8712).